Reading from the N-terminus, the 400-residue chain is Large envelope protein (400 aa).

Methionine 1 bears the N-acetylmethionine mark. The N-myristoyl glycine; by host moiety is linked to residue glycine 2. Positions 2–119 (GGRLPKPRKG…PPLRDSHPQA (118 aa)) are pre-S1. The segment at 2-174 (GGRLPKPRKG…SSRIGDPAPT (173 aa)) is pre-S. Over 2–181 (GGRLPKPRKG…APTMENITSG (180 aa)) the chain is Virion surface; in external conformation. Topologically, residues 2 to 253 (GGRLPKPRKG…PGYRWMCLRR (252 aa)) are intravirion; in internal conformation. A glycan (N-linked (GlcNAc...) asparagine) is linked at arginine 4. A disordered region spans residues 84-116 (TLTTVPAVPPPASTNRQSGRQPTPISPPLRDSH). Residues 96–106 (STNRQSGRQPT) are compositionally biased toward polar residues. Residues 120–174 (MQWNSTKFHQTLQDPRVRGLYFPAGGSSSGTVNPAPNIASHISSISSRIGDPAPT) form a pre-S2 region. Residues 182–202 (FLGPLLVLQAGFFLLTRILTI) traverse the membrane as a helical segment. Residues 203–253 (PQSLDSWWTSLNFLGEAPVCLGQNSQSPTSNHSPTSCPPICPGYRWMCLRR) are Intravirion; in external conformation-facing. Residues 254-274 (FIIFLFILLLCLIFLLVLLDC) form a helical membrane-spanning segment. Residues 275 to 348 (QGMLPVCPLI…WASVRFSWLS (74 aa)) lie on the Virion surface side of the membrane. Asparagine 320 carries N-linked (GlcNAc...) asparagine; by host glycosylation. Residues 349–369 (LLVPFVQWFVGLSPTVWLSVI) traverse the membrane as a helical segment. At 370-375 (WMMWYW) the chain is on the intravirion side. Residues 376 to 398 (GPSLYNILSPFIPLLPIFFCLWV) form a helical membrane-spanning segment. At 399 to 400 (YI) the chain is on the virion surface side.

Belongs to the orthohepadnavirus major surface antigen family. In its internal form (Li-HBsAg), interacts with the capsid protein and with the isoform S. Interacts with host chaperone CANX. In terms of assembly, associates with host chaperone CANX through its pre-S2 N glycan; this association may be essential for isoform M proper secretion. As to quaternary structure, interacts with isoform L. Interacts with the antigens of satellite virus HDV (HDVAgs); this interaction is required for encapsidation of HDV genomic RNA. Isoform M is N-terminally acetylated by host at a ratio of 90%, and N-glycosylated by host at the pre-S2 region. In terms of processing, myristoylated.

It is found in the virion membrane. Its function is as follows. The large envelope protein exists in two topological conformations, one which is termed 'external' or Le-HBsAg and the other 'internal' or Li-HBsAg. In its external conformation the protein attaches the virus to cell receptors and thereby initiating infection. This interaction determines the species specificity and liver tropism. This attachment induces virion internalization predominantly through caveolin-mediated endocytosis. The large envelope protein also assures fusion between virion membrane and endosomal membrane. In its internal conformation the protein plays a role in virion morphogenesis and mediates the contact with the nucleocapsid like a matrix protein. In terms of biological role, the middle envelope protein plays an important role in the budding of the virion. It is involved in the induction of budding in a nucleocapsid independent way. In this process the majority of envelope proteins bud to form subviral lipoprotein particles of 22 nm of diameter that do not contain a nucleocapsid. This chain is Large envelope protein, found in Hepatitis B virus genotype A3 (isolate Cameroon/CMR711/1994) (HBV-A).